A 122-amino-acid polypeptide reads, in one-letter code: MIQQESRLKVADNSGAREVLCIKVLGGSGRKIANIGDVIVCSVKEATPGGVVKKGDVVKAVIVRSKSGVRRNDGSYIKFDENAAVIVRDDKSPRGTRIFGPVARELRDNQFMKIVSLAPEVL.

This sequence belongs to the universal ribosomal protein uL14 family. Part of the 50S ribosomal subunit. Forms a cluster with proteins L3 and L19. In the 70S ribosome, L14 and L19 interact and together make contacts with the 16S rRNA in bridges B5 and B8.

Functionally, binds to 23S rRNA. Forms part of two intersubunit bridges in the 70S ribosome. The chain is Large ribosomal subunit protein uL14 from Shouchella clausii (strain KSM-K16) (Alkalihalobacillus clausii).